Reading from the N-terminus, the 359-residue chain is Peptide methionine sulfoxide reductase MsrA/MsrB (359 aa).

A peptide methionine sulfoxide reductase A region spans residues 36–189 (RVIYLAGGCF…PSGYCHIDLK (154 aa)). Residue Cys-44 is part of the active site. One can recognise a MsrB domain in the interval 206-329 (DEVLKKKLTK…NSAALRFIPL (124 aa)). Cys-318 functions as the Nucleophile in the catalytic mechanism.

In the N-terminal section; belongs to the MsrA Met sulfoxide reductase family. The protein in the C-terminal section; belongs to the MsrB Met sulfoxide reductase family.

It carries out the reaction L-methionyl-[protein] + [thioredoxin]-disulfide + H2O = L-methionyl-(S)-S-oxide-[protein] + [thioredoxin]-dithiol. The catalysed reaction is [thioredoxin]-disulfide + L-methionine + H2O = L-methionine (S)-S-oxide + [thioredoxin]-dithiol. The enzyme catalyses L-methionyl-[protein] + [thioredoxin]-disulfide + H2O = L-methionyl-(R)-S-oxide-[protein] + [thioredoxin]-dithiol. Functionally, has an important function as a repair enzyme for proteins that have been inactivated by oxidation. Catalyzes the reversible oxidation-reduction of methionine sulfoxide in proteins to methionine. In Helicobacter pylori (strain ATCC 700392 / 26695) (Campylobacter pylori), this protein is Peptide methionine sulfoxide reductase MsrA/MsrB (msrAB).